We begin with the raw amino-acid sequence, 158 residues long: MHTKAIYPGTFDPVTNGHTDLIERAAKLFKQVVIGIAANPSKQPRFSLEERVKLVKRVTEHLDNVEVVGFSGLLVDFAKEQNASVLVRGLRAVSDFEYEFQLANMNRRLSADLESVFLTPAEENSFISSTLVKEVALHGGDVSQFVHEEVAKALQKKD.

Thr10 contributes to the substrate binding site. ATP contacts are provided by residues 10-11 (TF) and His18. Residues Lys42, Leu74, and Arg88 each contribute to the substrate site. ATP-binding positions include 89–91 (GLR), Glu99, and 124–130 (NSFISST).

Belongs to the bacterial CoaD family. As to quaternary structure, homohexamer. Mg(2+) serves as cofactor.

The protein localises to the cytoplasm. It catalyses the reaction (R)-4'-phosphopantetheine + ATP + H(+) = 3'-dephospho-CoA + diphosphate. The protein operates within cofactor biosynthesis; coenzyme A biosynthesis; CoA from (R)-pantothenate: step 4/5. In terms of biological role, reversibly transfers an adenylyl group from ATP to 4'-phosphopantetheine, yielding dephospho-CoA (dPCoA) and pyrophosphate. This chain is Phosphopantetheine adenylyltransferase, found in Shewanella loihica (strain ATCC BAA-1088 / PV-4).